We begin with the raw amino-acid sequence, 708 residues long: Fatty acid oxidation complex subunit alpha (708 aa).

Positions 1–190 are enoyl-CoA hydratase; that stretch reads MDMEKTFNLT…KMGLVDDAVP (190 aa). The interval 310 to 708 is 3-hydroxyacyl-CoA dehydrogenase; it reads QKVNKVMVLG…MAEEGTRFFS (399 aa).

This sequence in the N-terminal section; belongs to the enoyl-CoA hydratase/isomerase family. In the central section; belongs to the 3-hydroxyacyl-CoA dehydrogenase family. In terms of assembly, heterotetramer of two alpha chains (FadJ) and two beta chains (FadI).

It is found in the cytoplasm. The enzyme catalyses a (3S)-3-hydroxyacyl-CoA = a (2E)-enoyl-CoA + H2O. It carries out the reaction a 4-saturated-(3S)-3-hydroxyacyl-CoA = a (3E)-enoyl-CoA + H2O. It catalyses the reaction a (3S)-3-hydroxyacyl-CoA + NAD(+) = a 3-oxoacyl-CoA + NADH + H(+). The catalysed reaction is (3S)-3-hydroxybutanoyl-CoA = (3R)-3-hydroxybutanoyl-CoA. It functions in the pathway lipid metabolism; fatty acid beta-oxidation. Its function is as follows. Catalyzes the formation of a hydroxyacyl-CoA by addition of water on enoyl-CoA. Also exhibits 3-hydroxyacyl-CoA epimerase and 3-hydroxyacyl-CoA dehydrogenase activities. The chain is Fatty acid oxidation complex subunit alpha from Shewanella halifaxensis (strain HAW-EB4).